Here is a 405-residue protein sequence, read N- to C-terminus: L-carnitine CoA-transferase (405 aa).

CoA-binding residues include lysine 97 and arginine 104. Aspartate 169 (nucleophile) is an active-site residue.

The protein belongs to the CoA-transferase III family. CaiB subfamily. As to quaternary structure, homodimer.

The protein resides in the cytoplasm. It catalyses the reaction crotonobetainyl-CoA + (R)-carnitine = crotonobetaine + (R)-carnitinyl-CoA. The enzyme catalyses 4-(trimethylamino)butanoyl-CoA + (R)-carnitine = (R)-carnitinyl-CoA + 4-(trimethylamino)butanoate. The protein operates within amine and polyamine metabolism; carnitine metabolism. Functionally, catalyzes the reversible transfer of the CoA moiety from gamma-butyrobetainyl-CoA to L-carnitine to generate L-carnitinyl-CoA and gamma-butyrobetaine. Is also able to catalyze the reversible transfer of the CoA moiety from gamma-butyrobetainyl-CoA or L-carnitinyl-CoA to crotonobetaine to generate crotonobetainyl-CoA. In Escherichia coli (strain SE11), this protein is L-carnitine CoA-transferase.